We begin with the raw amino-acid sequence, 600 residues long: Elongation factor 4 (600 aa).

Residues Ser-5–Thr-187 form the tr-type G domain. GTP is bound by residues Asp-17–Thr-22 and Asn-134–Asp-137.

The protein belongs to the TRAFAC class translation factor GTPase superfamily. Classic translation factor GTPase family. LepA subfamily.

It localises to the cell inner membrane. The catalysed reaction is GTP + H2O = GDP + phosphate + H(+). Its function is as follows. Required for accurate and efficient protein synthesis under certain stress conditions. May act as a fidelity factor of the translation reaction, by catalyzing a one-codon backward translocation of tRNAs on improperly translocated ribosomes. Back-translocation proceeds from a post-translocation (POST) complex to a pre-translocation (PRE) complex, thus giving elongation factor G a second chance to translocate the tRNAs correctly. Binds to ribosomes in a GTP-dependent manner. This Psychrobacter sp. (strain PRwf-1) protein is Elongation factor 4.